We begin with the raw amino-acid sequence, 287 residues long: Nucleotide-binding protein Pmob_0154 (287 aa).

15-22 (GLSGAGKT) contributes to the ATP binding site. 64–67 (DIRW) contributes to the GTP binding site.

It belongs to the RapZ-like family.

Its function is as follows. Displays ATPase and GTPase activities. This Petrotoga mobilis (strain DSM 10674 / SJ95) protein is Nucleotide-binding protein Pmob_0154.